The primary structure comprises 175 residues: Interleukin-10 (175 aa).

The first 18 residues, 1-18, serve as a signal peptide directing secretion; it reads MPSSALLYCLIFLAGVAA. Disulfide bonds link Cys-26–Cys-122 and Cys-76–Cys-128. An N-linked (GlcNAc...) asparagine glycan is attached at Asn-130.

It belongs to the IL-10 family. Homodimer. Interacts with IL10RA and IL10RB.

The protein localises to the secreted. Functionally, major immune regulatory cytokine that acts on many cells of the immune system where it has profound anti-inflammatory functions, limiting excessive tissue disruption caused by inflammation. Mechanistically, IL10 binds to its heterotetrameric receptor comprising IL10RA and IL10RB leading to JAK1 and STAT2-mediated phosphorylation of STAT3. In turn, STAT3 translocates to the nucleus where it drives expression of anti-inflammatory mediators. Targets antigen-presenting cells (APCs) such as macrophages and monocytes and inhibits their release of pro-inflammatory cytokines including granulocyte-macrophage colony-stimulating factor /GM-CSF, granulocyte colony-stimulating factor/G-CSF, IL-1 alpha, IL-1 beta, IL-6, IL-8 and TNF-alpha. Also interferes with antigen presentation by reducing the expression of MHC-class II and co-stimulatory molecules, thereby inhibiting their ability to induce T cell activation. In addition, controls the inflammatory response of macrophages by reprogramming essential metabolic pathways including mTOR signaling. This is Interleukin-10 (IL10) from Sus scrofa (Pig).